Reading from the N-terminus, the 268-residue chain is Ubiquinone/menaquinone biosynthesis C-methyltransferase UbiE (268 aa).

Residues 1 to 23 (MTDQHAFATEQVQLDPTLSPTTE) form a disordered region. The span at 10 to 23 (EQVQLDPTLSPTTE) shows a compositional bias: polar residues. Residues Thr91, Asp112, 140-141 (NA), and Ser157 contribute to the S-adenosyl-L-methionine site.

The protein belongs to the class I-like SAM-binding methyltransferase superfamily. MenG/UbiE family.

It catalyses the reaction a 2-demethylmenaquinol + S-adenosyl-L-methionine = a menaquinol + S-adenosyl-L-homocysteine + H(+). The catalysed reaction is a 2-methoxy-6-(all-trans-polyprenyl)benzene-1,4-diol + S-adenosyl-L-methionine = a 5-methoxy-2-methyl-3-(all-trans-polyprenyl)benzene-1,4-diol + S-adenosyl-L-homocysteine + H(+). It functions in the pathway quinol/quinone metabolism; menaquinone biosynthesis; menaquinol from 1,4-dihydroxy-2-naphthoate: step 2/2. Its pathway is cofactor biosynthesis; ubiquinone biosynthesis. Its function is as follows. Methyltransferase required for the conversion of demethylmenaquinol (DMKH2) to menaquinol (MKH2) and the conversion of 2-polyprenyl-6-methoxy-1,4-benzoquinol (DDMQH2) to 2-polyprenyl-3-methyl-6-methoxy-1,4-benzoquinol (DMQH2). The sequence is that of Ubiquinone/menaquinone biosynthesis C-methyltransferase UbiE from Pasteurella multocida (strain Pm70).